A 352-amino-acid chain; its full sequence is Speedy protein E18 (352 aa).

Positions 1–12 are enriched in basic residues; it reads MDRTKTRFRKRG. The segment at 1 to 90 is disordered; the sequence is MDRTKTRFRK…EPEKELAPEP (90 aa). Polar residues predominate over residues 16–39; it reads GKITTSRQPHPQNEQSLQRSTSGY. The span at 76 to 90 shows a compositional bias: acidic residues; the sequence is DESEEEPEKELAPEP.

Belongs to the Speedy/Ringo family.

The sequence is that of Speedy protein E18 from Homo sapiens (Human).